Consider the following 894-residue polypeptide: Glutamate receptor 3 (894 aa).

The signal sequence occupies residues Met1–Gly28. At Gly29 to Ala552 the chain is on the extracellular side. 5 N-linked (GlcNAc...) asparagine glycosylation sites follow: Asn63, Asn266, Asn380, Asn415, and Asn422. A disulfide bridge links Cys91 with Cys340. Residues Pro508, Thr510, and Arg515 each contribute to the L-glutamate site. Residues Tyr553 to Val573 traverse the membrane as a helical segment. At Ser574–Glu602 the chain is on the cytoplasmic side. An intramembrane region (helical; Pore-forming) is located at residues Phe603–Gln618. The stretch at Gln619 to Cys621 is an intramembrane region. A lipid anchor (S-palmitoyl cysteine) is attached at Cys621. Over Asp622–Ser627 the chain is Cytoplasmic. Residues Leu628–Tyr648 traverse the membrane as a helical segment. The Extracellular segment spans residues Thr649 to Asn823. Residues Ser686, Thr687, and Glu737 each coordinate L-glutamate. An intrachain disulfide couples Cys750 to Cys805. A helical transmembrane segment spans residues Val824–Ile844. At Glu845–Ile894 the chain is on the cytoplasmic side. Cys847 carries the S-palmitoyl cysteine lipid modification. Residues Tyr877 and Tyr887 each carry the phosphotyrosine modification.

This sequence belongs to the glutamate-gated ion channel (TC 1.A.10.1) family. GRIA3 subfamily. In terms of assembly, homotetramer or heterotetramer of pore-forming glutamate receptor subunits. Tetramers may be formed by the dimerization of dimers. Interacts with PICK1, GRIP1 and GRIP2. Found in a complex with GRIA1, GRIA2, GRIA4, CNIH2, CNIH3, CACNG2, CACNG3, CACNG4, CACNG5, CACNG7 and CACNG8. Interacts with CACNG5. Found in a complex with GRIA1, GRIA2, GRIA4, DLG4, CACNG8 and CNIH2.

It localises to the cell membrane. The protein resides in the postsynaptic cell membrane. Its subcellular location is the postsynaptic density membrane. It carries out the reaction Ca(2+)(in) = Ca(2+)(out). Ionotropic glutamate receptor that functions as a ligand-gated cation channel, gated by L-glutamate and glutamatergic agonists such as alpha-amino-3-hydroxy-5-methyl-4-isoxazolepropionic acid (AMPA), quisqualic acid, and kainic acid. L-glutamate acts as an excitatory neurotransmitter at many synapses in the central nervous system and plays an important role in fast excitatory synaptic transmission by inducing long-term potentiation. Binding of the excitatory neurotransmitter L-glutamate induces a conformation change, leading to the opening of the cation channel, and thereby converts the chemical signal to an electrical impulse upon entry of calcium. The receptor then desensitizes rapidly and enters a transient inactive state, characterized by the presence of bound agonist. In the presence of CACNG8, shows resensitization which is characterized by a delayed accumulation of current flux upon continued application of glutamate. The polypeptide is Glutamate receptor 3 (Homo sapiens (Human)).